The sequence spans 333 residues: Tryptophan--tRNA ligase (333 aa).

ATP-binding positions include 9 to 11 (QPT) and 17 to 18 (GN). The short motif at 10–18 (PTNNLTLGN) is the 'HIGH' region element. Asp-140 contributes to the L-tryptophan binding site. ATP contacts are provided by residues 152-154 (GQD), Ile-191, and 200-204 (KMSKS). The 'KMSKS' region signature appears at 200 to 204 (KMSKS).

The protein belongs to the class-I aminoacyl-tRNA synthetase family. Homodimer.

It localises to the cytoplasm. The catalysed reaction is tRNA(Trp) + L-tryptophan + ATP = L-tryptophyl-tRNA(Trp) + AMP + diphosphate + H(+). Functionally, catalyzes the attachment of tryptophan to tRNA(Trp). The protein is Tryptophan--tRNA ligase of Ureaplasma parvum serovar 3 (strain ATCC 700970).